The sequence spans 35 residues: Photosystem II reaction center protein T (35 aa).

Residues Ala-3–Phe-23 form a helical membrane-spanning segment.

This sequence belongs to the PsbT family. As to quaternary structure, PSII is composed of 1 copy each of membrane proteins PsbA, PsbB, PsbC, PsbD, PsbE, PsbF, PsbH, PsbI, PsbJ, PsbK, PsbL, PsbM, PsbT, PsbY, PsbZ, Psb30/Ycf12, at least 3 peripheral proteins of the oxygen-evolving complex and a large number of cofactors. It forms dimeric complexes.

The protein resides in the plastid. It localises to the chloroplast thylakoid membrane. In terms of biological role, found at the monomer-monomer interface of the photosystem II (PS II) dimer, plays a role in assembly and dimerization of PSII. PSII is a light-driven water plastoquinone oxidoreductase, using light energy to abstract electrons from H(2)O, generating a proton gradient subsequently used for ATP formation. The polypeptide is Photosystem II reaction center protein T (Drimys granadensis).